A 157-amino-acid chain; its full sequence is Probable succinate transporter subunit YjjB (157 aa).

5 helical membrane passes run 8–28, 34–54, 55–75, 87–107, and 129–149; these read LALM…AMVF, ALPW…LMMS, AGFN…SIGI, VFTV…TAMI, and FLKA…PGLW.

The protein belongs to the ThrE exporter (TC 2.A.79) family. In terms of assembly, the transporter is composed of YjjB and YjjP.

The protein resides in the cell inner membrane. Its function is as follows. Involved in succinate export with YjjP. Both proteins are required for export. This chain is Probable succinate transporter subunit YjjB, found in Salmonella typhi.